A 554-amino-acid polypeptide reads, in one-letter code: Glucose-6-phosphate isomerase (554 aa).

Residue Glu-359 is the Proton donor of the active site. Residues His-390 and Lys-518 contribute to the active site.

The protein belongs to the GPI family.

It localises to the cytoplasm. The enzyme catalyses alpha-D-glucose 6-phosphate = beta-D-fructose 6-phosphate. The protein operates within carbohydrate biosynthesis; gluconeogenesis. It functions in the pathway carbohydrate degradation; glycolysis; D-glyceraldehyde 3-phosphate and glycerone phosphate from D-glucose: step 2/4. Functionally, catalyzes the reversible isomerization of glucose-6-phosphate to fructose-6-phosphate. The protein is Glucose-6-phosphate isomerase of Pseudomonas putida (strain GB-1).